Consider the following 651-residue polypeptide: ATP-dependent zinc metalloprotease FtsH (651 aa).

Topologically, residues Met-1–Pro-134 are extracellular. Residues Trp-135–Met-155 traverse the membrane as a helical segment. The Cytoplasmic portion of the chain corresponds to Thr-156–Gly-651. Gly-229–Thr-236 contacts ATP. A Zn(2+)-binding site is contributed by His-451. Residue Glu-452 is part of the active site. Residues His-455 and Asp-527 each contribute to the Zn(2+) site.

In the central section; belongs to the AAA ATPase family. It in the C-terminal section; belongs to the peptidase M41 family. In terms of assembly, homohexamer. Requires Zn(2+) as cofactor.

It is found in the cell membrane. Acts as a processive, ATP-dependent zinc metallopeptidase for both cytoplasmic and membrane proteins. Plays a role in the quality control of integral membrane proteins. The chain is ATP-dependent zinc metalloprotease FtsH from Rubrobacter xylanophilus (strain DSM 9941 / JCM 11954 / NBRC 16129 / PRD-1).